Consider the following 84-residue polypeptide: uncharacterized protein (84 aa).

The helical transmembrane segment at Thr-13 to Leu-35 threads the bilayer. A coiled-coil region spans residues Leu-41–Lys-84.

Its subcellular location is the host membrane. This is an uncharacterized protein from Sulfolobus islandicus rod-shaped virus 1 (SIRV-1).